We begin with the raw amino-acid sequence, 122 residues long: Fluoride-specific ion channel FluC (122 aa).

Transmembrane regions (helical) follow at residues 4-24 (ILLI…VSGI), 36-56 (LIVN…SLFG), 65-85 (FIIT…YESF), and 100-120 (ILLN…ASMF). Positions 72 and 75 each coordinate Na(+).

This sequence belongs to the fluoride channel Fluc/FEX (TC 1.A.43) family.

The protein resides in the cell membrane. The catalysed reaction is fluoride(in) = fluoride(out). Na(+) is not transported, but it plays an essential structural role and its presence is essential for fluoride channel function. In terms of biological role, fluoride-specific ion channel. Important for reducing fluoride concentration in the cell, thus reducing its toxicity. In Methanococcus maripaludis (strain DSM 14266 / JCM 13030 / NBRC 101832 / S2 / LL), this protein is Fluoride-specific ion channel FluC.